The chain runs to 26 residues: Stage V sporulation protein M (26 aa).

The segment at 3-9 is important for localization; it reads FYTIKLP.

Interacts with SpoIVA. May interact with the ATP-dependent protease FtsH.

It is found in the forespore outer membrane. Coordinates cortex and coat assembly during sporulation. Associates with the spore coat protein SpoIVA and with the outer forespore membrane, thereby serving as a membrane anchor that tethers SpoIVA and the entire spore coat to the forespore surface. May also serve as a competitive inhibitor of FtsH activity during sporulation. This is Stage V sporulation protein M from Bacillus subtilis (strain 168).